The chain runs to 438 residues: Trigger factor (438 aa).

Residues 160–245 (DDKVVIDFVG…VKKIQEAQLP (86 aa)) enclose the PPIase FKBP-type domain.

It belongs to the FKBP-type PPIase family. Tig subfamily.

It localises to the cytoplasm. It carries out the reaction [protein]-peptidylproline (omega=180) = [protein]-peptidylproline (omega=0). In terms of biological role, involved in protein export. Acts as a chaperone by maintaining the newly synthesized protein in an open conformation. Functions as a peptidyl-prolyl cis-trans isomerase. This chain is Trigger factor, found in Francisella philomiragia subsp. philomiragia (strain ATCC 25017 / CCUG 19701 / FSC 153 / O#319-036).